Consider the following 179-residue polypeptide: Large ribosomal subunit protein uL6 (179 aa).

Belongs to the universal ribosomal protein uL6 family. As to quaternary structure, part of the 50S ribosomal subunit.

In terms of biological role, this protein binds to the 23S rRNA, and is important in its secondary structure. It is located near the subunit interface in the base of the L7/L12 stalk, and near the tRNA binding site of the peptidyltransferase center. This Methylacidiphilum infernorum (isolate V4) (Methylokorus infernorum (strain V4)) protein is Large ribosomal subunit protein uL6.